The chain runs to 640 residues: Putative solute carrier organic anion transporter family member 1B7 (640 aa).

Residues 1 to 16 (MKISTTQIERRFEISS) lie on the Extracellular side of the membrane. Residues 17 to 37 (SLVGLIDGSFEIGNLFVIVFV) traverse the membrane as a helical segment. The Cytoplasmic segment spans residues 38 to 49 (SYFGSKLHRPKL). A helical transmembrane segment spans residues 50-70 (IGIGCFLMGTGSILMALPHFF). Over 71-123 (MGYYRYSKETNIDPSENSTSNLPNCLINQMLSLNRTPSEIIERGCVKESGSHM) the chain is Extracellular. Residues 124–144 (WIYVFMGNMLRGIGETPIVPL) traverse the membrane as a helical segment. Residues 145 to 159 (GISYIDDFAKEGHSS) lie on the Cytoplasmic side of the membrane. A helical transmembrane segment spans residues 160–180 (LYLGTVNVMGMTGLVFAFMLG). Over 181-211 (SLFAKMYVDIGYVDLSTIRITPKDSRWVGAW) the chain is Extracellular. The chain crosses the membrane as a helical span at residues 212-232 (WLGFLVSGIVSIISSIPFFFL). Residues 233–292 (PLNPNKPQKERKVSLFLHVLKTNDKRNQIANLTNRRKYITKNVTGFFQSLKSILTNPLYV) are Cytoplasmic-facing. Phosphoserine is present on S246. Residues 293–313 (IFVIFTLLHMSSYIASLTYII) form a helical membrane-spanning segment. Residues 314–329 (KMVEQQYGWSASKTNF) are Extracellular-facing. Residues 330 to 350 (LLGVLALPAVAIGMFSGGYII) form a helical membrane-spanning segment. Residues 351–362 (KKFKLSLVGLAK) lie on the Cytoplasmic side of the membrane. The chain crosses the membrane as a helical span at residues 363–383 (LAFCSATVHLLSQVLYFFLIC). At 384 to 492 (ESKSVAGLTL…CTRKSYVYFV (109 aa)) the chain is on the extracellular side. Residues 406–461 (DVPLSYCNSECNCDESQWEPVCGNNGITYLSPCLAGCKSSSGNKEPIVFYNCSCVE) form the Kazal-like domain. Cystine bridges form between C412–C442, C418–C438, and C427–C459. Residues 493 to 513 (IQVLDAFLCAVGLTSYSVLVI) traverse the membrane as a helical segment. Residues 514-521 (RIVQPELK) are Cytoplasmic-facing. A helical membrane pass occupies residues 522–542 (ALAIGFHSMIMRSLGGILVPI). Topologically, residues 543–577 (YFGALIDTTCMKWSTNSCGARGACRIYNSTYLGRA) are extracellular. Residues 578-598 (FFGLKVALIFPVLVLLTVFIF) traverse the membrane as a helical segment. At 599–640 (VVRKKSHGKDTKVLENERQVMDEANLEFLNDSEHFVPSAEEQ) the chain is on the cytoplasmic side. S636 carries the post-translational modification Phosphoserine.

Belongs to the organo anion transporter (TC 2.A.60) family.

It is found in the cell membrane. The protein is Putative solute carrier organic anion transporter family member 1B7 (SLCO1B7) of Homo sapiens (Human).